A 210-amino-acid polypeptide reads, in one-letter code: Glutathione S-transferase P (210 aa).

The 80-residue stretch at 2–81 folds into the GST N-terminal domain; it reads PPYTVVYFPV…HLGRTLGLYG (80 aa). Tyrosine 4 carries the post-translational modification Phosphotyrosine; by EGFR. Glutathione is bound by residues tyrosine 8, arginine 14, tryptophan 39, lysine 45, and 52–53; that span reads QL. Position 62 is a phosphothreonine (threonine 62). 65 to 66 is a glutathione binding site; sequence QS. Residues 83–204 enclose the GST C-terminal domain; that stretch reads DQREAALVDM…ASPEHVNLPI (122 aa). An N6-succinyllysine mark is found at lysine 103 and lysine 116. Position 128 is an N6-acetyllysine (lysine 128).

It belongs to the GST superfamily. Pi family. Homodimer. Interacts with CDK5.

The protein resides in the cytoplasm. Its subcellular location is the mitochondrion. It localises to the nucleus. It catalyses the reaction RX + glutathione = an S-substituted glutathione + a halide anion + H(+). It carries out the reaction prostaglandin J2 + glutathione = prostaglandin J2-S-(R)-glutathione. The enzyme catalyses prostaglandin J2 + glutathione = prostaglandin J2-S-(S)-glutathione. The catalysed reaction is prostaglandin A2 + glutathione = prostaglandin A2-S-(S)-glutathione. It catalyses the reaction 11(S)-hydroxy-14(S),15(S)-epoxy-(5Z,8Z,12E)-eicosatrienoate + glutathione = (11S,15S)-dihydroxy-14(R)-S-glutathionyl-(5Z,8Z,12E)-eicosatrienoate. In terms of biological role, conjugation of reduced glutathione to a wide number of exogenous and endogenous hydrophobic electrophiles. Involved in the formation of glutathione conjugates of both prostaglandin A2 (PGA2) and prostaglandin J2 (PGJ2). Participates in the formation of novel hepoxilin regioisomers. Negatively regulates CDK5 activity via p25/p35 translocation to prevent neurodegeneration. In Pongo abelii (Sumatran orangutan), this protein is Glutathione S-transferase P (GSTP1).